Consider the following 228-residue polypeptide: HTH-type transcriptional regulator ArcR (228 aa).

22 to 141 (SYINIPVGVL…VKLFSLLSET (120 aa)) is an a nucleoside 3',5'-cyclic phosphate binding site. An HTH crp-type domain is found at 155–228 (KLAKERVTKI…SKNWLVSKDL (74 aa)). The H-T-H motif DNA-binding region spans 188–207 (IQLLSDMAGISRETTSHIIN).

Its subcellular location is the cytoplasm. Functionally, positively regulates the expression of the arcABDCR operon under anaerobic conditions, thus playing an essential role in arginine catabolism. May also control the expression of genes encoding proteins which are involved in anaerobic metabolism. Can bind cyclic AMP. The polypeptide is HTH-type transcriptional regulator ArcR (arcR) (Staphylococcus epidermidis (strain ATCC 35984 / DSM 28319 / BCRC 17069 / CCUG 31568 / BM 3577 / RP62A)).